We begin with the raw amino-acid sequence, 492 residues long: Putative heme-binding protein VNG_2021C (492 aa).

His177 contributes to the heme binding site. Residues 253-301 are disordered; the sequence is AGERVPAPEGGADAHGEGERTHHHGDSDHHDGDDGEQHHHSTGDEADDG. Positions 264–301 are enriched in basic and acidic residues; the sequence is ADAHGEGERTHHHGDSDHHDGDDGEQHHHSTGDEADDG. The ABM domain maps to 402–490; sequence GTMGMFYETK…VLADRPRHVF (89 aa).

In the N-terminal section; belongs to the ChdC family.

The protein is Putative heme-binding protein VNG_2021C of Halobacterium salinarum (strain ATCC 700922 / JCM 11081 / NRC-1) (Halobacterium halobium).